The chain runs to 156 residues: Ribosome maturation factor RimP (156 aa).

Belongs to the RimP family.

It localises to the cytoplasm. Its function is as follows. Required for maturation of 30S ribosomal subunits. The sequence is that of Ribosome maturation factor RimP from Fusobacterium nucleatum subsp. nucleatum (strain ATCC 25586 / DSM 15643 / BCRC 10681 / CIP 101130 / JCM 8532 / KCTC 2640 / LMG 13131 / VPI 4355).